Consider the following 185-residue polypeptide: Elongation factor P (185 aa).

The protein belongs to the elongation factor P family.

Its subcellular location is the cytoplasm. The protein operates within protein biosynthesis; polypeptide chain elongation. In terms of biological role, involved in peptide bond synthesis. Stimulates efficient translation and peptide-bond synthesis on native or reconstituted 70S ribosomes in vitro. Probably functions indirectly by altering the affinity of the ribosome for aminoacyl-tRNA, thus increasing their reactivity as acceptors for peptidyl transferase. In Streptococcus pyogenes serotype M49 (strain NZ131), this protein is Elongation factor P.